A 336-amino-acid chain; its full sequence is Holliday junction branch migration complex subunit RuvB (336 aa).

The large ATPase domain (RuvB-L) stretch occupies residues 4-184 (ADRLISADAI…FGIVQRLEFY (181 aa)). ATP-binding positions include Arg24, Gly65, Lys68, Thr69, Thr70, 131–133 (EDY), Arg174, Tyr184, and Arg221. Position 69 (Thr69) interacts with Mg(2+). A small ATPAse domain (RuvB-S) region spans residues 185–255 (NVADLQYIVG…VATQALDMLA (71 aa)). The interval 258–336 (TEGFDYMDRK…HFGLTREDLG (79 aa)) is head domain (RuvB-H). Arg294, Arg313, and Arg318 together coordinate DNA.

Belongs to the RuvB family. Homohexamer. Forms an RuvA(8)-RuvB(12)-Holliday junction (HJ) complex. HJ DNA is sandwiched between 2 RuvA tetramers; dsDNA enters through RuvA and exits via RuvB. An RuvB hexamer assembles on each DNA strand where it exits the tetramer. Each RuvB hexamer is contacted by two RuvA subunits (via domain III) on 2 adjacent RuvB subunits; this complex drives branch migration. In the full resolvosome a probable DNA-RuvA(4)-RuvB(12)-RuvC(2) complex forms which resolves the HJ.

It localises to the cytoplasm. It carries out the reaction ATP + H2O = ADP + phosphate + H(+). In terms of biological role, the RuvA-RuvB-RuvC complex processes Holliday junction (HJ) DNA during genetic recombination and DNA repair, while the RuvA-RuvB complex plays an important role in the rescue of blocked DNA replication forks via replication fork reversal (RFR). RuvA specifically binds to HJ cruciform DNA, conferring on it an open structure. The RuvB hexamer acts as an ATP-dependent pump, pulling dsDNA into and through the RuvAB complex. RuvB forms 2 homohexamers on either side of HJ DNA bound by 1 or 2 RuvA tetramers; 4 subunits per hexamer contact DNA at a time. Coordinated motions by a converter formed by DNA-disengaged RuvB subunits stimulates ATP hydrolysis and nucleotide exchange. Immobilization of the converter enables RuvB to convert the ATP-contained energy into a lever motion, pulling 2 nucleotides of DNA out of the RuvA tetramer per ATP hydrolyzed, thus driving DNA branch migration. The RuvB motors rotate together with the DNA substrate, which together with the progressing nucleotide cycle form the mechanistic basis for DNA recombination by continuous HJ branch migration. Branch migration allows RuvC to scan DNA until it finds its consensus sequence, where it cleaves and resolves cruciform DNA. This chain is Holliday junction branch migration complex subunit RuvB, found in Pectobacterium carotovorum subsp. carotovorum (strain PC1).